Reading from the N-terminus, the 105-residue chain is NADH-quinone oxidoreductase subunit K (105 aa).

3 helical membrane-spanning segments follow: residues 9 to 29, 34 to 54, and 65 to 85; these read PNYY…GVLV, IVLF…LVTF, and IIAF…LAII.

Belongs to the complex I subunit 4L family. In terms of assembly, NDH-1 is composed of 14 different subunits. Subunits NuoA, H, J, K, L, M, N constitute the membrane sector of the complex.

Its subcellular location is the cell membrane. The catalysed reaction is a quinone + NADH + 5 H(+)(in) = a quinol + NAD(+) + 4 H(+)(out). Its function is as follows. NDH-1 shuttles electrons from NADH, via FMN and iron-sulfur (Fe-S) centers, to quinones in the respiratory chain. The immediate electron acceptor for the enzyme in this species is believed to be a menaquinone. Couples the redox reaction to proton translocation (for every two electrons transferred, four hydrogen ions are translocated across the cytoplasmic membrane), and thus conserves the redox energy in a proton gradient. The polypeptide is NADH-quinone oxidoreductase subunit K (Salinispora arenicola (strain CNS-205)).